The primary structure comprises 285 residues: Formate channel FocA (285 aa).

The Cytoplasmic portion of the chain corresponds to 1–30; the sequence is MKADNPFDLLLPAAMAKVAEEAGVYKATKH. Residues 31 to 56 traverse the membrane as a helical segment; the sequence is PLKTFYLAITAGVFISIAFVFYITAT. The Periplasmic segment spans residues 57 to 64; sequence TGTGTMPF. The helical transmembrane segment at 65–85 threads the bilayer; sequence GMAKLVGGICFSLGLILCVVC. The Cytoplasmic portion of the chain corresponds to 86–112; that stretch reads GADLFTSTVLIVVAKASGRITWGQLAK. Residues 113-135 traverse the membrane as a helical segment; that stretch reads NWLNVYFGNLVGALLFVLLMWLS. Over 136 to 160 the chain is Periplasmic; it reads GEYMTANGQWGLNVLQTADHKVHHT. Residues 161–181 form a helical membrane-spanning segment; that stretch reads FIEAVCLGILANLMVCLAVWM. The Cytoplasmic portion of the chain corresponds to 182-187; sequence SYSGRS. A helical membrane pass occupies residues 188–205; it reads LMDKAFIMVLPVAMFVAS. Topologically, residues 206-249 are periplasmic; it reads GFEHSIANMFMIPMGIVIRDFASPEFWTAVGSAPENFSHLTVMN. A helical membrane pass occupies residues 250-276; it reads FITDNLIPVTIGNIIGGGLLVGLTYWV. At 277–285 the chain is on the cytoplasmic side; sequence IYLRENDHH.

It belongs to the FNT transporter (TC 1.A.16) family. In terms of assembly, homopentamer.

Its subcellular location is the cell inner membrane. It catalyses the reaction formate(in) = formate(out). Functionally, involved in the bidirectional transport of formate during mixed-acid fermentation. Functions to maintain relatively constant intracellular formate levels during growth, using different mechanisms for efflux and uptake of the anion. Is impermeable to water. In Escherichia coli O157:H7, this protein is Formate channel FocA.